The primary structure comprises 396 residues: MNRWLKNMLHNEAASGVLIFLAAVAAMLIENSSLEPYYNSFLNIPVAVQFSELKIAKPLLLWINDGLMAVFFLLVGLELKREFLEGQLAQPANVVLPVVGAVGGIVGPALIYVMFNYTNPVALQGWAVPTATDIAFAMGVLALLGKRVPAAIKLFLLTLAIIDDLVAIVIIAIFYTSDLSVGSLTVAGGAIALLFLLNRIGVKGIAPYVLVGMVLWVAVLKSGVHATLAGVVLAMAIPIKGETPEHGSPLHALEHDLHHVVGLVILPLFAFANAGVSLAGLGLNVLLEPVAMGIGLGLLLGKQIGVMGAVWLANLLGVAKKPESLSWTQLYGVALLCGIGFTMSLFISSLAFEHSGAQVVAGAADAGHARLGILSGSLVSGVLGYLVLRFSLARKG.

12 helical membrane passes run 9–29, 59–79, 95–115, 125–145, 154–174, 177–197, 200–220, 223–243, 260–280, 281–301, 332–352, and 373–393; these read LHNE…AMLI, LLLW…GLEL, VLPV…YVMF, GWAV…ALLG, LFLL…IAIF, SDLS…LFLL, IGVK…VAVL, GVHA…KGET, VVGL…SLAG, LGLN…LLLG, GVAL…SLAF, and ILSG…FSLA.

It belongs to the NhaA Na(+)/H(+) (TC 2.A.33) antiporter family.

Its subcellular location is the cell inner membrane. The catalysed reaction is Na(+)(in) + 2 H(+)(out) = Na(+)(out) + 2 H(+)(in). Functionally, na(+)/H(+) antiporter that extrudes sodium in exchange for external protons. The chain is Na(+)/H(+) antiporter NhaA 1 from Magnetococcus marinus (strain ATCC BAA-1437 / JCM 17883 / MC-1).